We begin with the raw amino-acid sequence, 200 residues long: Recombination protein RecR (200 aa).

The C4-type zinc finger occupies 58–73 (CQKCHNISDTTLCSIC). Positions 81-176 (GLICVVENIQ…KLSNIARGVA (96 aa)) constitute a Toprim domain.

Belongs to the RecR family.

Its function is as follows. May play a role in DNA repair. It seems to be involved in an RecBC-independent recombinational process of DNA repair. It may act with RecF and RecO. The protein is Recombination protein RecR of Amoebophilus asiaticus (strain 5a2).